The following is a 58-amino-acid chain: Ferredoxin-2 (58 aa).

4Fe-4S ferredoxin-type domains lie at I2–E27 and K30–S58. A [3Fe-4S] cluster-binding site is contributed by C8. Position 11 is a cysteine methyl disulfide (C11). C14 provides a ligand contact to [3Fe-4S] cluster. C18 and C42 form a disulfide bridge. Position 50 (C50) interacts with [3Fe-4S] cluster.

Homodimer (ferredoxin I) or homotetramer (ferredoxin II). It depends on [3Fe-4S] cluster as a cofactor. [4Fe-4S] cluster serves as cofactor.

Its function is as follows. Ferredoxins are iron-sulfur proteins that transfer electrons in a wide variety of metabolic reactions. In Megalodesulfovibrio gigas (Desulfovibrio gigas), this protein is Ferredoxin-2.